The following is a 216-amino-acid chain: Large ribosomal subunit protein uL1 (216 aa).

This sequence belongs to the universal ribosomal protein uL1 family. Component of the large ribosomal subunit.

Its subcellular location is the cytoplasm. Its function is as follows. Component of the large ribosomal subunit. The ribosome is a large ribonucleoprotein complex responsible for the synthesis of proteins in the cell. In Danio rerio (Zebrafish), this protein is Large ribosomal subunit protein uL1 (rpl10a).